Consider the following 291-residue polypeptide: Porphobilinogen deaminase (291 aa).

Cys-238 carries the S-(dipyrrolylmethanemethyl)cysteine modification.

It belongs to the HMBS family. Monomer. Dipyrromethane serves as cofactor.

It carries out the reaction 4 porphobilinogen + H2O = hydroxymethylbilane + 4 NH4(+). It participates in porphyrin-containing compound metabolism; protoporphyrin-IX biosynthesis; coproporphyrinogen-III from 5-aminolevulinate: step 2/4. In terms of biological role, tetrapolymerization of the monopyrrole PBG into the hydroxymethylbilane pre-uroporphyrinogen in several discrete steps. The sequence is that of Porphobilinogen deaminase from Clostridium beijerinckii (strain ATCC 51743 / NCIMB 8052) (Clostridium acetobutylicum).